The sequence spans 311 residues: tRNA dimethylallyltransferase (311 aa).

11-18 (GPTAVGKT) lines the ATP pocket. 13–18 (TAVGKT) is a binding site for substrate. The segment at 36–39 (DSVQ) is interaction with substrate tRNA.

The protein belongs to the IPP transferase family. As to quaternary structure, monomer. Mg(2+) is required as a cofactor.

It catalyses the reaction adenosine(37) in tRNA + dimethylallyl diphosphate = N(6)-dimethylallyladenosine(37) in tRNA + diphosphate. Functionally, catalyzes the transfer of a dimethylallyl group onto the adenine at position 37 in tRNAs that read codons beginning with uridine, leading to the formation of N6-(dimethylallyl)adenosine (i(6)A). The chain is tRNA dimethylallyltransferase from Exiguobacterium sp. (strain ATCC BAA-1283 / AT1b).